Consider the following 899-residue polypeptide: Suppressor of glycerol defect protein 1 (899 aa).

A compositionally biased stretch (basic and acidic residues) spans 24–33 (QDERFSISEG). Disordered regions lie at residues 24–181 (QDER…VSYP) and 248–326 (ETNS…DDSE). A compositionally biased stretch (basic residues) spans 34 to 49 (KKRRRGNGKHLSRKEK). Residues 65 to 77 (REINSSRLKSAPT) are compositionally biased toward polar residues. Residues 103 to 126 (DESESNENWDSDEVLTDEVAEESG) are compositionally biased toward acidic residues. Composition is skewed to basic and acidic residues over residues 134-143 (ETMKKLESLK), 162-174 (SYEK…RDTN), and 251-264 (SMRK…KAFS). A compositionally biased stretch (acidic residues) spans 265–292 (SDDDLSASDFEDSDGLSESDNDSVADSD). The MIF4G domain occupies 335-540 (SKKVNSSLNK…DTMSDLKNNR (206 aa)). An MI domain is found at 644–781 (DIRRAIFISI…KLDVFKHVPF (138 aa)). Serine 736 bears the Phosphoserine mark.

It belongs to the CWC22 family. In terms of assembly, interacts with PLC1.

The protein resides in the nucleus. It is found in the nucleolus. Involved in osmoregulatory glycerol response, probably through its interaction with PLC1 which regulates the expression of GDP1. In Saccharomyces cerevisiae (strain ATCC 204508 / S288c) (Baker's yeast), this protein is Suppressor of glycerol defect protein 1 (SGD1).